Consider the following 202-residue polypeptide: MEHYISLLIRSVFIENMALSFFLGMCTFLAVSKKVTTAMGLGVAVIVVLAISVPANQIIYQGILAPGALAWAGVPDADLSFLKFITFIGVIAALVQILEMTLDKYFPPLYNALGIFLPLITVNCAIFGAVAFMVERDYNLTESLVFGVGSGIGWALAIVLLAAVREKMKYSDVPNGLRGLGITFISAGLMALGFMSFSGVSL.

The next 6 membrane-spanning stretches (helical) occupy residues 11–31 (SVFI…FLAV), 35–55 (VTTA…SVPA), 79–99 (LSFL…QILE), 114–134 (GIFL…AFMV), 144–164 (LVFG…LAAV), and 180–200 (LGIT…FSGV).

Belongs to the NqrDE/RnfAE family. As to quaternary structure, composed of six subunits; NqrA, NqrB, NqrC, NqrD, NqrE and NqrF.

Its subcellular location is the cell inner membrane. The catalysed reaction is a ubiquinone + n Na(+)(in) + NADH + H(+) = a ubiquinol + n Na(+)(out) + NAD(+). Its function is as follows. NQR complex catalyzes the reduction of ubiquinone-1 to ubiquinol by two successive reactions, coupled with the transport of Na(+) ions from the cytoplasm to the periplasm. NqrA to NqrE are probably involved in the second step, the conversion of ubisemiquinone to ubiquinol. This is Na(+)-translocating NADH-quinone reductase subunit E from Shewanella denitrificans (strain OS217 / ATCC BAA-1090 / DSM 15013).